Reading from the N-terminus, the 274-residue chain is NADPH-dependent 7-cyano-7-deazaguanine reductase (274 aa).

Residue 80–82 coordinates substrate; sequence VES. 82–83 serves as a coordination point for NADPH; that stretch reads SK. Catalysis depends on C181, which acts as the Thioimide intermediate. Residue D188 is the Proton donor of the active site. 220-221 provides a ligand contact to substrate; sequence HE. 249–250 contacts NADPH; that stretch reads RG.

Belongs to the GTP cyclohydrolase I family. QueF type 2 subfamily. Homodimer.

The protein localises to the cytoplasm. The catalysed reaction is 7-aminomethyl-7-carbaguanine + 2 NADP(+) = 7-cyano-7-deazaguanine + 2 NADPH + 3 H(+). It participates in tRNA modification; tRNA-queuosine biosynthesis. In terms of biological role, catalyzes the NADPH-dependent reduction of 7-cyano-7-deazaguanine (preQ0) to 7-aminomethyl-7-deazaguanine (preQ1). The protein is NADPH-dependent 7-cyano-7-deazaguanine reductase of Paraburkholderia phytofirmans (strain DSM 17436 / LMG 22146 / PsJN) (Burkholderia phytofirmans).